Here is a 721-residue protein sequence, read N- to C-terminus: BRCA1-A complex subunit RAP80 (721 aa).

The interval 1-65 is disordered; sequence MPRRKKKGKE…GLQKTKIKQS (65 aa). The tract at residues 1–101 is necessary for transcriptional repression; it reads MPRRKKKGKE…SEQEAREVNS (101 aa). Lys-20 is covalently cross-linked (Glycyl lysine isopeptide (Lys-Gly) (interchain with G-Cter in SUMO2)). Ser-29 carries the phosphoserine modification. Residue Lys-31 forms a Glycyl lysine isopeptide (Lys-Gly) (interchain with G-Cter in SUMO2) linkage. A phosphoserine mark is found at Ser-44 and Ser-46. Positions 60–78 match the LR motif motif; that stretch reads TKIKQSSRAKCLAKRKIAQ. Residues Lys-75 and Lys-90 each participate in a glycyl lysine isopeptide (Lys-Gly) (interchain with G-Cter in SUMO2) cross-link. In terms of domain architecture, UIM 1 spans 80–99; the sequence is TEEEQFALALKMSEQEAREV. A disordered region spans residues 93-204; sequence EQEAREVNSQ…SVSSGSWDQS (112 aa). Residues 97–103 are UIM-linker; that stretch reads REVNSQE. A necessary for interaction with NR6A1 N-terminus region spans residues 100-200; it reads NSQEEEEEEL…EEPVSVSSGS (101 aa). Phosphoserine is present on Ser-101. Positions 105-124 constitute a UIM 2 domain; that stretch reads EEEELLRKAIAESLNSCRPS. Residues 117 to 130 are compositionally biased toward polar residues; sequence SLNSCRPSDASATR. Position 140 is a phosphoserine (Ser-140). Residues 194–204 are compositionally biased toward low complexity; that stretch reads VSVSSGSWDQS. A Phosphoserine modification is found at Ser-205. Lys-245 is covalently cross-linked (Glycyl lysine isopeptide (Lys-Gly) (interchain with G-Cter in SUMO2)). The segment at 270 to 400 is AIR; sequence TGGTVNYFWG…EEEPTTSHGQ (131 aa). Residues 334–369 form a disordered region; the sequence is NECGQGEQASEKNEGISEDMGDEDKEERQESRASVW. Residues 349–358 are compositionally biased toward acidic residues; it reads ISEDMGDEDK. Glycyl lysine isopeptide (Lys-Gly) (interchain with G-Cter in SUMO2) cross-links involve residues Lys-382 and Lys-387. The segment at 391–418 is disordered; it reads EEEPTTSHGQSSQGLFVEETSEEGNSVP. The segment at 400–500 is necessary for interaction with NR6A1 C-terminus; sequence QSSQGLFVEE…EIHTSTFSSS (101 aa). Phosphoserine is present on residues Ser-402 and Ser-420. Lys-429 is covalently cross-linked (Glycyl lysine isopeptide (Lys-Gly) (interchain with G-Cter in SUMO2)). The residue at position 467 (Ser-467) is a Phosphoserine. The UBZ4-type zinc finger occupies 502–529; the sequence is QVSCPLCDQGFPPTKIERHAMYCNGLMG. Positions 505, 508, 520, and 524 each coordinate Zn(2+). A zinc-finger-like region region spans residues 505-582; sequence CPLCDQGFPP…REYQCHVESC (78 aa). Glycyl lysine isopeptide (Lys-Gly) (interchain with G-Cter in SUMO2) cross-links involve residues Lys-544, Lys-559, Lys-562, and Lys-607. Position 627 is a phosphoserine (Ser-627). Glycyl lysine isopeptide (Lys-Gly) (interchain with G-Cter in SUMO2) cross-links involve residues Lys-635 and Lys-642. Phosphoserine is present on residues Ser-655 and Ser-679. Glycyl lysine isopeptide (Lys-Gly) (interchain with G-Cter in SUMO2) cross-links involve residues Lys-698 and Lys-699.

The protein belongs to the RAP80 family. In terms of assembly, component of the ARISC complex, at least composed of UIMC1/RAP80, ABRAXAS1, BRCC3/BRCC36, BABAM2 and BABAM1/NBA1. Component of the BRCA1-A complex, at least composed of the BRCA1, BARD1, UIMC1/RAP80, ABRAXAS1, BRCC3/BRCC36, BABAM2 and BABAM1/NBA1. In the BRCA1-A complex, interacts directly with ABRAXAS1. Interacts with UBE2I. Interacts with NR6A1. Interacts with ESR1. Interacts with TSP57. Interacts with TRAIP. Post-translationally, sumoylated. Phosphorylated upon DNA damage by ATM or ATR.

The protein localises to the nucleus. In terms of biological role, ubiquitin-binding protein. Specifically recognizes and binds 'Lys-63'-linked ubiquitin. Plays a central role in the BRCA1-A complex by specifically binding 'Lys-63'-linked ubiquitinated histones H2A and H2AX at DNA lesions sites, leading to target the BRCA1-BARD1 heterodimer to sites of DNA damage at double-strand breaks (DSBs). The BRCA1-A complex also possesses deubiquitinase activity that specifically removes 'Lys-63'-linked ubiquitin on histones H2A and H2AX. Also weakly binds monoubiquitin but with much less affinity than 'Lys-63'-linked ubiquitin. May interact with monoubiquitinated histones H2A and H2B; the relevance of such results is however unclear in vivo. Does not bind Lys-48'-linked ubiquitin. May indirectly act as a transcriptional repressor by inhibiting the interaction of NR6A1 with the corepressor NCOR1. The chain is BRCA1-A complex subunit RAP80 (UIMC1) from Sus scrofa (Pig).